The following is a 492-amino-acid chain: Probable glycine dehydrogenase (decarboxylating) subunit 2 (492 aa).

At Lys274 the chain carries N6-(pyridoxal phosphate)lysine.

The protein belongs to the GcvP family. C-terminal subunit subfamily. The glycine cleavage system is composed of four proteins: P, T, L and H. In this organism, the P 'protein' is a heterodimer of two subunits. Requires pyridoxal 5'-phosphate as cofactor.

The enzyme catalyses N(6)-[(R)-lipoyl]-L-lysyl-[glycine-cleavage complex H protein] + glycine + H(+) = N(6)-[(R)-S(8)-aminomethyldihydrolipoyl]-L-lysyl-[glycine-cleavage complex H protein] + CO2. In terms of biological role, the glycine cleavage system catalyzes the degradation of glycine. The P protein binds the alpha-amino group of glycine through its pyridoxal phosphate cofactor; CO(2) is released and the remaining methylamine moiety is then transferred to the lipoamide cofactor of the H protein. The polypeptide is Probable glycine dehydrogenase (decarboxylating) subunit 2 (Staphylococcus haemolyticus (strain JCSC1435)).